The chain runs to 111 residues: uncharacterized protein (111 aa).

This is an uncharacterized protein from Acanthamoeba polyphaga mimivirus (APMV).